A 421-amino-acid chain; its full sequence is Gamma-glutamyl phosphate reductase (421 aa).

It belongs to the gamma-glutamyl phosphate reductase family.

It localises to the cytoplasm. The catalysed reaction is L-glutamate 5-semialdehyde + phosphate + NADP(+) = L-glutamyl 5-phosphate + NADPH + H(+). The protein operates within amino-acid biosynthesis; L-proline biosynthesis; L-glutamate 5-semialdehyde from L-glutamate: step 2/2. Catalyzes the NADPH-dependent reduction of L-glutamate 5-phosphate into L-glutamate 5-semialdehyde and phosphate. The product spontaneously undergoes cyclization to form 1-pyrroline-5-carboxylate. This is Gamma-glutamyl phosphate reductase from Leptospira biflexa serovar Patoc (strain Patoc 1 / ATCC 23582 / Paris).